Consider the following 326-residue polypeptide: Vitamin B12 import system permease protein BtuC (326 aa).

Transmembrane regions (helical) follow at residues W15 to E35, L61 to F81, P88 to G108, L112 to L132, L146 to F166, G184 to I204, G240 to I260, V274 to A294, and E302 to L322.

The protein belongs to the binding-protein-dependent transport system permease family. FecCD subfamily. In terms of assembly, the complex is composed of two ATP-binding proteins (BtuD), two transmembrane proteins (BtuC) and a solute-binding protein (BtuF).

Its subcellular location is the cell inner membrane. Functionally, part of the ABC transporter complex BtuCDF involved in vitamin B12 import. Involved in the translocation of the substrate across the membrane. The polypeptide is Vitamin B12 import system permease protein BtuC (Shigella boydii serotype 18 (strain CDC 3083-94 / BS512)).